A 332-amino-acid polypeptide reads, in one-letter code: Holliday junction branch migration complex subunit RuvB (332 aa).

Positions 1 to 181 are large ATPase domain (RuvB-L); that stretch reads MARILDNNVM…FGITGHMEYY (181 aa). Residues L20, R21, G62, K65, T66, T67, 128 to 130, R171, Y181, and R218 contribute to the ATP site; that span reads EDF. T66 is a binding site for Mg(2+). The tract at residues 182–252 is small ATPAse domain (RuvB-S); it reads QEKDLTEIVE…ITDRALTMLD (71 aa). The tract at residues 255-332 is head domain (RuvB-H); that stretch reads REGLNYIDQK…RHLGYPYQNT (78 aa). DNA-binding residues include R291, R310, R312, and R315.

The protein belongs to the RuvB family. As to quaternary structure, homohexamer. Forms an RuvA(8)-RuvB(12)-Holliday junction (HJ) complex. HJ DNA is sandwiched between 2 RuvA tetramers; dsDNA enters through RuvA and exits via RuvB. An RuvB hexamer assembles on each DNA strand where it exits the tetramer. Each RuvB hexamer is contacted by two RuvA subunits (via domain III) on 2 adjacent RuvB subunits; this complex drives branch migration. In the full resolvosome a probable DNA-RuvA(4)-RuvB(12)-RuvC(2) complex forms which resolves the HJ.

It is found in the cytoplasm. It carries out the reaction ATP + H2O = ADP + phosphate + H(+). Its function is as follows. The RuvA-RuvB-RuvC complex processes Holliday junction (HJ) DNA during genetic recombination and DNA repair, while the RuvA-RuvB complex plays an important role in the rescue of blocked DNA replication forks via replication fork reversal (RFR). RuvA specifically binds to HJ cruciform DNA, conferring on it an open structure. The RuvB hexamer acts as an ATP-dependent pump, pulling dsDNA into and through the RuvAB complex. RuvB forms 2 homohexamers on either side of HJ DNA bound by 1 or 2 RuvA tetramers; 4 subunits per hexamer contact DNA at a time. Coordinated motions by a converter formed by DNA-disengaged RuvB subunits stimulates ATP hydrolysis and nucleotide exchange. Immobilization of the converter enables RuvB to convert the ATP-contained energy into a lever motion, pulling 2 nucleotides of DNA out of the RuvA tetramer per ATP hydrolyzed, thus driving DNA branch migration. The RuvB motors rotate together with the DNA substrate, which together with the progressing nucleotide cycle form the mechanistic basis for DNA recombination by continuous HJ branch migration. Branch migration allows RuvC to scan DNA until it finds its consensus sequence, where it cleaves and resolves cruciform DNA. The protein is Holliday junction branch migration complex subunit RuvB of Streptococcus pyogenes serotype M18 (strain MGAS8232).